Consider the following 367-residue polypeptide: FAD synthetase 2, chloroplastic (367 aa).

Residues 1–57 constitute a chloroplast transit peptide; it reads MLCGGSRVLQHLSDHNHHNSIGLGLGFCGAKIVQLSSFFLRPSQAMAKSHHFSRKLR.

Mg(2+) serves as cofactor.

The protein resides in the plastid. Its subcellular location is the chloroplast. It catalyses the reaction FMN + ATP + H(+) = FAD + diphosphate. It functions in the pathway cofactor biosynthesis; FAD biosynthesis; FAD from FMN: step 1/1. Catalyzes the adenylation of flavin mononucleotide (FMN) to form flavin adenine dinucleotide (FAD) coenzyme. The protein is FAD synthetase 2, chloroplastic of Arabidopsis thaliana (Mouse-ear cress).